Consider the following 202-residue polypeptide: 3-isopropylmalate dehydratase small subunit (202 aa).

This sequence belongs to the LeuD family. LeuD type 1 subfamily. Heterodimer of LeuC and LeuD.

The enzyme catalyses (2R,3S)-3-isopropylmalate = (2S)-2-isopropylmalate. The protein operates within amino-acid biosynthesis; L-leucine biosynthesis; L-leucine from 3-methyl-2-oxobutanoate: step 2/4. Functionally, catalyzes the isomerization between 2-isopropylmalate and 3-isopropylmalate, via the formation of 2-isopropylmaleate. This is 3-isopropylmalate dehydratase small subunit from Buchnera aphidicola subsp. Pemphigus spyrothecae.